A 369-amino-acid polypeptide reads, in one-letter code: Ubiquinone biosynthesis protein COQ4, mitochondrial (369 aa).

The N-terminal 28 residues, 1 to 28, are a transit peptide targeting the mitochondrion; it reads MTSILGSARPLIQVGPKSRNASTSMSRL. The disordered stretch occupies residues 1–70; that stretch reads MTSILGSARP…NPTNASRHPR (70 aa). Composition is skewed to polar residues over residues 19–33 and 47–66; these read RNAS…SFPT and YATI…TNAS. The Zn(2+) site is built by H198, D199, H202, and E214. Residues 330–369 are disordered; sequence FSGRAKKGGKRRGWPSKILEHQKAQHQQQQQQQKVDESRN. Residues 332–343 are compositionally biased toward basic residues; sequence GRAKKGGKRRGW.

This sequence belongs to the COQ4 family. Component of a multi-subunit COQ enzyme complex, composed of at least COQ3, COQ4, COQ5, COQ6, COQ7 and COQ9. The cofactor is Zn(2+).

The protein localises to the mitochondrion inner membrane. It carries out the reaction a 4-hydroxy-3-methoxy-5-(all-trans-polyprenyl)benzoate + H(+) = a 2-methoxy-6-(all-trans-polyprenyl)phenol + CO2. Its pathway is cofactor biosynthesis; ubiquinone biosynthesis. Its function is as follows. Lyase that catalyzes the C1-decarboxylation of 4-hydroxy-3-methoxy-5-(all-trans-polyprenyl)benzoic acid into 2-methoxy-6-(all-trans-polyprenyl)phenol during ubiquinone biosynthesis. In Mycosarcoma maydis (Corn smut fungus), this protein is Ubiquinone biosynthesis protein COQ4, mitochondrial.